Here is a 270-residue protein sequence, read N- to C-terminus: UPF0354 protein BA_4944/GBAA_4944/BAS4588 (270 aa).

It belongs to the UPF0354 family.

This Bacillus anthracis protein is UPF0354 protein BA_4944/GBAA_4944/BAS4588.